The chain runs to 778 residues: Ribosome biogenesis protein BOP1 homolog (778 aa).

Residues 1-10 show a composition bias toward basic residues; sequence MAKKQDRKRK. A disordered region spans residues 1 to 152; the sequence is MAKKQDRKRK…DSDTSDEEDI (152 aa). Acidic residues-rich tracts occupy residues 44–53, 60–72, and 84–105; these read EDSTDDEGID, SSED…DEEG, and SSDE…DEEE. Over residues 114 to 124 the composition is skewed to polar residues; it reads TTSSKAETNNE. Acidic residues predominate over residues 142-151; the sequence is EDSDTSDEED. WD repeat units lie at residues 438-479, 481-519, 564-606, 609-647, 650-689, 693-732, and 748-778; these read GHTD…RTIE, EDVV…KLLI, NHFK…SQIP, KSKG…LIKK, TNSK…KPYQ, LHRN…DLLQ, and RDDF…RLYT.

This sequence belongs to the WD repeat BOP1/ERB1 family.

It is found in the nucleus. The protein resides in the nucleolus. The protein localises to the nucleoplasm. In terms of biological role, required for maturation of ribosomal RNAs and formation of the large ribosomal subunit. The polypeptide is Ribosome biogenesis protein BOP1 homolog (Drosophila willistoni (Fruit fly)).